A 244-amino-acid polypeptide reads, in one-letter code: High frequency lysogenization protein HflD homolog (244 aa).

Belongs to the HflD family.

The protein localises to the cytoplasm. Its subcellular location is the cell inner membrane. In Acinetobacter baumannii (strain ATCC 17978 / DSM 105126 / CIP 53.77 / LMG 1025 / NCDC KC755 / 5377), this protein is High frequency lysogenization protein HflD homolog.